A 131-amino-acid chain; its full sequence is Glycine cleavage system H protein (131 aa).

Positions 24 to 106 constitute a Lipoyl-binding domain; that stretch reads RVTVGISDHA…YGDGWMYVVE (83 aa). Position 65 is an N6-lipoyllysine (K65).

It belongs to the GcvH family. As to quaternary structure, the glycine cleavage system is composed of four proteins: P, T, L and H. (R)-lipoate is required as a cofactor.

The glycine cleavage system catalyzes the degradation of glycine. The H protein shuttles the methylamine group of glycine from the P protein to the T protein. In Stenotrophomonas maltophilia (strain R551-3), this protein is Glycine cleavage system H protein.